Reading from the N-terminus, the 472-residue chain is Sodium-coupled neutral amino acid transporter 5 (472 aa).

Methionine 1 is subject to N-acetylmethionine. Over 1 to 48 (MELQDPKMNGALPSDAVGYRQEREGFLPSRGPAPGSKPVQFMDFEGKT) the chain is Cytoplasmic. Residues 49–71 (SFGMSVFNLSNAIMGSGILGLAY) traverse the membrane as a helical segment. Residues 72–87 (AMAHTGVIFFLALLLC) are Extracellular-facing. The chain crosses the membrane as a helical span at residues 88-108 (IALLSSYSIHLLLTCAGIAGI). Residues 109-125 (RAYEQLGQRAFGPAGKV) are Cytoplasmic-facing. The helical transmembrane segment at 126 to 146 (VVATVICLHNVGAMSSYLFII) threads the bilayer. The Extracellular portion of the chain corresponds to 147-166 (KSELPLVIGTFLYMDPEGDW). Residues 167–187 (FLKGNLLIIIVSVLIILPLAL) traverse the membrane as a helical segment. The Cytoplasmic portion of the chain corresponds to 188 to 192 (MKHLG). A helical transmembrane segment spans residues 193-213 (YLGYTSGLSLTCMLFFLVSVI). Topologically, residues 214–257 (YKKFQLGCAIGHNETAMESEALVGLPSQGLNSSCEAQMFTVDSQ) are extracellular. A disulfide bridge connects residues cysteine 221 and cysteine 247. N-linked (GlcNAc...) asparagine glycosylation is present at asparagine 226. A helical transmembrane segment spans residues 258–278 (MSYTVPIMAFAFVCHPEVLPI). The Cytoplasmic portion of the chain corresponds to 279 to 295 (YTELCRPSKRRMQAVAN). The chain crosses the membrane as a helical span at residues 296 to 316 (VSIGAMFCMYGLTATFGYLTF). The Extracellular segment spans residues 317 to 334 (YSSVKAEMLHMYSQKDPL). Residues 335–355 (ILCVRLAVLLAVTLTVPVVLF) form a helical membrane-spanning segment. Residues 356 to 376 (PIRRALQQLLFPGKAFSWPRH) lie on the Cytoplasmic side of the membrane. The helical transmembrane segment at 377-397 (VAIALILLVLVNVLVICVPTI) threads the bilayer. The Extracellular portion of the chain corresponds to 398-399 (RD). Residues 400–420 (IFGVIGSTSAPSLIFILPSIF) traverse the membrane as a helical segment. The Cytoplasmic segment spans residues 421-439 (YLRIVPSEVEPFLSWPKIQ). A helical transmembrane segment spans residues 440–460 (ALCFGVLGVLFMAVSLGFMFA). Topologically, residues 461–472 (NWATGQSRMSGH) are extracellular.

The protein belongs to the amino acid/polyamine transporter 2 family. Predominantly expressed in stomach, brain, liver, lung and intestinal tract.

The protein localises to the cell membrane. The enzyme catalyses L-serine(out) + Na(+)(out) + H(+)(in) = L-serine(in) + Na(+)(in) + H(+)(out). It catalyses the reaction L-alanine(out) + Na(+)(out) + H(+)(in) = L-alanine(in) + Na(+)(in) + H(+)(out). The catalysed reaction is glycine(out) + Na(+)(out) + H(+)(in) = glycine(in) + Na(+)(in) + H(+)(out). It carries out the reaction L-glutamine(out) + Na(+)(out) + H(+)(in) = L-glutamine(in) + Na(+)(in) + H(+)(out). The enzyme catalyses L-asparagine(out) + Na(+)(out) + H(+)(in) = L-asparagine(in) + Na(+)(in) + H(+)(out). It catalyses the reaction L-histidine(out) + Na(+)(out) + H(+)(in) = L-histidine(in) + Na(+)(in) + H(+)(out). The catalysed reaction is L-cysteine(out) + Na(+)(out) + H(+)(in) = L-cysteine(in) + Na(+)(in) + H(+)(out). Its activity is regulated as follows. Not inhibited by lithium. Partial allosteric regulation on ions sodium binding. Symporter that cotransports neutral amino acids and sodium ions, coupled to an H(+) antiporter activity. Releases L-glutamine and glycine from astroglial cells and may participate in the glutamate/GABA-L-glutamine cycle and the NMDA receptors activation. In addition, contributes significantly to L-glutamine uptake in retina, namely in ganglion and Mueller cells therefore, participates in the retinal glutamate-glutamine cycle. The transport activity is pH sensitive and Li(+) tolerant. Moreover functions in both direction and is associated with large uncoupled fluxes of protons. The transport is electroneutral coupled to the cotransport of 1 Na(+) and the antiport of 1 H(+). May have a particular importance for modulation of net hepatic glutamine flux. The chain is Sodium-coupled neutral amino acid transporter 5 (SLC38A5) from Homo sapiens (Human).